Here is a 195-residue protein sequence, read N- to C-terminus: Pyridoxal 5'-phosphate synthase subunit PdxT (195 aa).

53–55 is an L-glutamine binding site; the sequence is GES. Catalysis depends on cysteine 82, which acts as the Nucleophile. L-glutamine contacts are provided by residues arginine 108 and 134–135; that span reads IR. Catalysis depends on charge relay system residues histidine 173 and glutamate 175.

Belongs to the glutaminase PdxT/SNO family. As to quaternary structure, in the presence of PdxS, forms a dodecamer of heterodimers. Only shows activity in the heterodimer.

It catalyses the reaction aldehydo-D-ribose 5-phosphate + D-glyceraldehyde 3-phosphate + L-glutamine = pyridoxal 5'-phosphate + L-glutamate + phosphate + 3 H2O + H(+). It carries out the reaction L-glutamine + H2O = L-glutamate + NH4(+). Its pathway is cofactor biosynthesis; pyridoxal 5'-phosphate biosynthesis. Its function is as follows. Catalyzes the hydrolysis of glutamine to glutamate and ammonia as part of the biosynthesis of pyridoxal 5'-phosphate. The resulting ammonia molecule is channeled to the active site of PdxS. The sequence is that of Pyridoxal 5'-phosphate synthase subunit PdxT from Methanobrevibacter smithii (strain ATCC 35061 / DSM 861 / OCM 144 / PS).